The following is an 83-amino-acid chain: Probable calcium-binding protein CML28 (83 aa).

EF-hand domains lie at 5–40 (TEKA…LGSV) and 43–75 (EDIK…NRGL). Residues Asp-18, Asn-20, Asp-22, Lys-24, Glu-29, Asp-53, Asp-55, Asp-57, Tyr-59, and Glu-64 each contribute to the Ca(2+) site.

Potential calcium sensor. The polypeptide is Probable calcium-binding protein CML28 (CML28) (Arabidopsis thaliana (Mouse-ear cress)).